The following is a 518-amino-acid chain: ESX-3 secretion system ATPase EccB3 (518 aa).

A disordered region spans residues 1-26; the sequence is MTGPVNPDDRRSFSSRTPVNENPDGV. Residues 71 to 91 form a helical membrane-spanning segment; sequence VLTGALILVTGLVGCFIFSLF.

This sequence belongs to the EccB family. Part of the ESX-3 / type VII secretion system (T7SS), which is composed of cytosolic and membrane components. The ESX-3 membrane complex is composed of EccB3, EccC3, EccD3 and EccE3.

It localises to the cell inner membrane. Its function is as follows. An ATPase. Part of the ESX-3 specialized secretion system, which is required for siderophore-mediated iron acquisition and for the secretion of EsxH and EsxG. This chain is ESX-3 secretion system ATPase EccB3, found in Mycolicibacterium smegmatis (strain ATCC 700084 / mc(2)155) (Mycobacterium smegmatis).